The primary structure comprises 296 residues: NADH-cytochrome b5 reductase 2 (296 aa).

The chain crosses the membrane as a helical span at residues 12–29; the sequence is LPIALGVGAASIATAIIL. An FAD-binding FR-type domain is found at 47–151; it reads NEWIDLPIIK…KGPITKWEWK (105 aa). 154–189 serves as a coordination point for FAD; sequence SYDSITLLGAGTGINPLYQLVHHIAENPEDNTKIHL.

The protein belongs to the flavoprotein pyridine nucleotide cytochrome reductase family. Requires FAD as cofactor.

It localises to the mitochondrion outer membrane. The enzyme catalyses 2 Fe(III)-[cytochrome b5] + NADH = 2 Fe(II)-[cytochrome b5] + NAD(+) + H(+). Functionally, may mediate the reduction of outer membrane cytochrome b5. In Kluyveromyces lactis (strain ATCC 8585 / CBS 2359 / DSM 70799 / NBRC 1267 / NRRL Y-1140 / WM37) (Yeast), this protein is NADH-cytochrome b5 reductase 2 (MCR1).